The following is a 208-amino-acid chain: AN1-type zinc finger protein 6 (208 aa).

The segment at 8 to 42 (SQVPMLCSTGCGFYGNPRTNGMCSVCYKEHLQRQN) adopts an A20-type zinc-finger fold. Cys-14, Cys-18, Cys-30, and Cys-33 together coordinate Zn(2+). Positions 41–68 (QNSSNGRISPPATSVSSLSESLPVQCTD) are enriched in polar residues. The tract at residues 41–140 (QNSSNGRISP…PSEEQSKSLE (100 aa)) is disordered. Ser-49 carries the post-translational modification Phosphoserine. The span at 75-94 (QSTLDSTSSSMQPSPVSNQS) shows a compositional bias: low complexity. Polar residues-rich tracts occupy residues 95–110 (LLSE…STSV) and 120–133 (LQAS…QPSE). The AN1-type zinc-finger motif lies at 143–189 (KQKKNRCFMCRKKVGLTGFECRCGNVYCGVHRYSDVHNCSYNYKADA). The Zn(2+) site is built by Cys-149, Cys-152, Cys-163, Cys-165, Cys-170, His-173, His-179, and Cys-181. Lys-204 is modified (N6-acetyllysine).

As to quaternary structure, interacts with PKN1. Interacts with TRAF2. Interacts with mono- and polyubiquitin. Interacts with PEX6. Interacts with PEX5 (Cys-linked ubiquitinated).

It localises to the cytoplasm. Its function is as follows. Involved in regulation of TNF-alpha induced NF-kappa-B activation and apoptosis. Involved in modulation of 'Lys-48'-linked polyubiquitination status of TRAF2 and decreases association of TRAF2 with RIPK1. Required for PTS1 target sequence-dependent protein import into peroxisomes and PEX5 stability; may cooperate with PEX6. In vitro involved in PEX5 export from the cytosol to peroxisomes. The sequence is that of AN1-type zinc finger protein 6 (ZFAND6) from Pongo abelii (Sumatran orangutan).